A 1170-amino-acid polypeptide reads, in one-letter code: Thrombospondin-1 (1170 aa).

Positions 1–18 are cleaved as a signal peptide; sequence MGLAWGLGVLFLMHVCGT. Positions 47–95 are heparin-binding; sequence RLVKGPDPSSPAFRIEDANLIPPVPDDKFQDLVDAVRAEKGFLLLASLR. One can recognise a Laminin G-like domain in the interval 65-270; the sequence is NLIPPVPDDK…HKTKDLQAIC (206 aa). Residues Cys-171 and Cys-232 are joined by a disulfide bond. N-linked (GlcNAc...) asparagine glycans are attached at residues Asn-248 and Asn-360. A VWFC domain is found at 316–373; sequence PLCYHNGVQYRNNEEWTVDSCTECHCQNSVTICKKVSCPIMPCSNATVPDGECCPRCW. TSP type-1 domains follow at residues 379-429, 435-490, and 492-547; these read DDGW…QECD, DGGW…DACP, and NGGW…QDCP. Residue Trp-385 is glycosylated (C-linked (Man) tryptophan). 3 cysteine pairs are disulfide-bonded: Cys-391–Cys-423, Cys-395–Cys-428, and Cys-406–Cys-413. Residue Ser-394 is glycosylated (O-linked (Fuc...) serine). Trp-438 and Trp-441 each carry a C-linked (Man) tryptophan glycan. Disulfide bonds link Cys-447–Cys-484, Cys-451–Cys-489, and Cys-462–Cys-474. An O-linked (Fuc...) threonine glycan is attached at Thr-450. Residue Trp-498 is glycosylated (C-linked (Man) tryptophan). Intrachain disulfides connect Cys-504/Cys-541, Cys-508/Cys-546, Cys-519/Cys-531, Cys-551/Cys-562, Cys-556/Cys-572, Cys-575/Cys-586, Cys-592/Cys-608, Cys-599/Cys-617, Cys-620/Cys-644, Cys-650/Cys-663, Cys-657/Cys-676, Cys-678/Cys-689, Cys-705/Cys-713, Cys-718/Cys-738, Cys-754/Cys-774, Cys-777/Cys-797, Cys-813/Cys-833, Cys-836/Cys-856, Cys-874/Cys-894, Cys-910/Cys-930, and Cys-946/Cys-1167. O-linked (Fuc...) threonine glycosylation occurs at Thr-507. An involved in retention in extracellular matrix (ECM); involved in trimer formation region spans residues 531 to 1152; the sequence is CVGDVTENQI…YAGGRLGLFV (622 aa). The 41-residue stretch at 547 to 587 folds into the EGF-like 1 domain; it reads PIDGCLSNPCFAGVKCTSYPDGSWKCGACPPGYSGNGIQCT. O-linked (Xyl) serine glycosylation is present at Ser-553. Residues 646–690 form the EGF-like 2 domain; that stretch reads PRNPCTDGTHDCNKNAKCNYLGHYSDPMYRCECKPGYAGNGIICG. 8 TSP type-3 repeats span residues 691–726, 727–762, 763–785, 786–821, 822–844, 845–882, 883–918, and 919–954; these read EDTD…NSGQ, EDYD…NPAQ, YDYD…NPDQ, ADTD…NVDQ, RDTD…NPDQ, LDSD…NANQ, ADHD…NPDQ, and KDSD…DISE. A glycan (N-linked (GlcNAc...) asparagine) is linked at Asn-708. The segment at 839 to 934 is disordered; sequence EHNPDQLDSD…GRGDACKDDF (96 aa). 3 stretches are compositionally biased toward basic and acidic residues: residues 840–854, 883–894, and 917–934; these read HNPD…RIGD, ADHDKDGKGDAC, and DQKD…KDDF. Residues 926-928 carry the Cell attachment site motif; that stretch reads RGD. The TSP C-terminal domain occupies 958–1170; sequence RRFQMIPLDP…SDLKYECRDP (213 aa). A glycan (N-linked (GlcNAc...) asparagine) is linked at Asn-1067.

Belongs to the thrombospondin family. As to quaternary structure, homotrimer; disulfide-linked. Can bind to fibrinogen, fibronectin, laminin, type V collagen and integrins alpha-V/beta-1, alpha-V/beta-3 and alpha-IIb/beta-3. Binds heparin. Interacts (via the C-terminal domain) with CD47. Interacts (via the TSP type I repeats) with CD36; the interaction conveys an antiangiogenic effect. Interacts (via the TSP type I repeats) with HRG; the interaction blocks the antiangiogenic effect of THBS1 with CD36. Interacts with ATF6 (via lumenal domain). Interacts with FN1; this interaction is enhanced by TNFAIP6, which may act as a bridging molecule between FN1 and THBS1. Interacts with SIRPA; the interaction stimulates phosphorylation of SIRPA. As to expression, expressed by platelets (at protein level). Expressed by monocyte-derived immature and mature dendritic cells (at protein level).

The protein localises to the secreted. It localises to the cell surface. It is found in the extracellular space. Its subcellular location is the extracellular matrix. The protein resides in the endoplasmic reticulum. The protein localises to the sarcoplasmic reticulum. Functionally, adhesive glycoprotein that mediates cell-to-cell and cell-to-matrix interactions. Multifunctional, involved in inflammation, angiogenesis, wound healing, reactive oxygen species (ROS) signaling, nitrous oxide (NO) signaling, apoptosis, senescence, aging, cellular self-renewal, stemness, and cardiovascular and metabolic homeostasis. Negatively modulates dendritic cell activation and cytokine release, as part of an autocrine feedback loop, contributing to the resolution of inflammation and immune homeostasis. Ligand for receptor CD47. Modulates nitrous oxide (NO) signaling via CD47, hence playing a role as a pressor agent, supporting blood pressure. Plays a role in endothelial cell senescence, acting via CD47, by increasing the abundance and activation of NADPH oxidase NOX1, and so generating excess ROS. Inhibits stem cell self-renewal, acting via CD47 signaling, probably by regulation of the stem cell transcription factors POU5F1/OCT4, SOX2, MYC/c-Myc and KLF4. Negatively modulates wound healing, acting via CD47. Ligand for receptor CD36. Involved in inducing apoptosis in podocytes in response to elevated free fatty acids, acting via CD36. Plays a role in suppressing angiogenesis, acting, depending on context, via CD36 or CD47. Promotes cellular senescence in a TP53-CDKN1A-RB1 signaling-dependent manner. Ligand for immunoglobulin-like cell surface receptor SIRPA. Involved in ROS signaling in non-phagocytic cells, stimulating NADPH oxidase-derived ROS production, acting via interaction with SIRPA. Plays a role in metabolic dysfunction in diet-induced obesity, perhaps acting by exacerbating adipose inflammatory activity; its effects may be mediated, at least in part, through enhanced adipocyte proliferation. Plays a role in ER stress response, via its interaction with the activating transcription factor 6 alpha (ATF6) which produces adaptive ER stress response factors. May be involved in age-related conditions, including metabolic dysregulation, during normal aging. The chain is Thrombospondin-1 from Homo sapiens (Human).